The primary structure comprises 118 residues: Ribonuclease P protein component (118 aa).

It belongs to the RnpA family. As to quaternary structure, consists of a catalytic RNA component (M1 or rnpB) and a protein subunit.

The catalysed reaction is Endonucleolytic cleavage of RNA, removing 5'-extranucleotides from tRNA precursor.. RNaseP catalyzes the removal of the 5'-leader sequence from pre-tRNA to produce the mature 5'-terminus. It can also cleave other RNA substrates such as 4.5S RNA. The protein component plays an auxiliary but essential role in vivo by binding to the 5'-leader sequence and broadening the substrate specificity of the ribozyme. The polypeptide is Ribonuclease P protein component (Rickettsia felis (strain ATCC VR-1525 / URRWXCal2) (Rickettsia azadi)).